A 252-amino-acid polypeptide reads, in one-letter code: PF03932 family protein CutC (252 aa).

It belongs to the CutC family.

The protein localises to the cytoplasm. The protein is PF03932 family protein CutC of Pectobacterium atrosepticum (strain SCRI 1043 / ATCC BAA-672) (Erwinia carotovora subsp. atroseptica).